The primary structure comprises 101 residues: UPF0125 protein VC_0850 (101 aa).

This sequence belongs to the UPF0125 (RnfH) family.

This is UPF0125 protein VC_0850 from Vibrio cholerae serotype O1 (strain ATCC 39315 / El Tor Inaba N16961).